The chain runs to 381 residues: Queuine tRNA-ribosyltransferase (381 aa).

Asp89 serves as the catalytic Proton acceptor. Substrate is bound by residues 89–93, Asp143, Gln187, and Gly214; that span reads DSGGF. Residues 245-251 are RNA binding; the sequence is GVGKPED. Asp264 acts as the Nucleophile in catalysis. An RNA binding; important for wobble base 34 recognition region spans residues 269–273; sequence TRNAR. The Zn(2+) site is built by Cys302, Cys304, Cys307, and His333.

It belongs to the queuine tRNA-ribosyltransferase family. As to quaternary structure, homodimer. Within each dimer, one monomer is responsible for RNA recognition and catalysis, while the other monomer binds to the replacement base PreQ1. Zn(2+) serves as cofactor.

It carries out the reaction 7-aminomethyl-7-carbaguanine + guanosine(34) in tRNA = 7-aminomethyl-7-carbaguanosine(34) in tRNA + guanine. Its pathway is tRNA modification; tRNA-queuosine biosynthesis. Functionally, catalyzes the base-exchange of a guanine (G) residue with the queuine precursor 7-aminomethyl-7-deazaguanine (PreQ1) at position 34 (anticodon wobble position) in tRNAs with GU(N) anticodons (tRNA-Asp, -Asn, -His and -Tyr). Catalysis occurs through a double-displacement mechanism. The nucleophile active site attacks the C1' of nucleotide 34 to detach the guanine base from the RNA, forming a covalent enzyme-RNA intermediate. The proton acceptor active site deprotonates the incoming PreQ1, allowing a nucleophilic attack on the C1' of the ribose to form the product. After dissociation, two additional enzymatic reactions on the tRNA convert PreQ1 to queuine (Q), resulting in the hypermodified nucleoside queuosine (7-(((4,5-cis-dihydroxy-2-cyclopenten-1-yl)amino)methyl)-7-deazaguanosine). The protein is Queuine tRNA-ribosyltransferase of Pectobacterium carotovorum subsp. carotovorum (strain PC1).